We begin with the raw amino-acid sequence, 657 residues long: L-glutamate oxidase precursor (657 aa).

The signal sequence occupies residues 1–12 (MTETPRDNSATR). FAD-binding residues include glutamate 86, alanine 87, arginine 95, methionine 120, arginine 121, methionine 350, glutamate 639, tryptophan 647, and isoleucine 648.

It belongs to the flavin monoamine oxidase family. LGOX subfamily. As to quaternary structure, the mature enzyme is a heterohexamer composed of 2 alpha chains, 2 beta chains and 2 gamma chains (alpha2beta2gamma2). It depends on FAD as a cofactor. Post-translationally, the precursor form is proteolytically cleaved by an endopeptidase into alpha, beta and gamma chains, which form the stable mature enzyme.

It is found in the secreted. It catalyses the reaction L-glutamate + O2 + H2O = H2O2 + 2-oxoglutarate + NH4(+). Proteinase K-treated enzyme exhibits improved affinity for the substrate, increased activity and increased thermostability. Catalyzes the oxidative deamination of L-glutamate to 2-ketoglutarate along with the production of ammonia and hydrogen peroxide. Exhibits strict specificity for L-glutamate, and shows only very weak activity with L-glutamine. This is L-glutamate oxidase precursor from Streptomyces diastatochromogenes.